Consider the following 435-residue polypeptide: Transcription activator AKTR-2 (435 aa).

Positions 16 to 43 form a DNA-binding region, zn(2)-C6 fungal-type; that stretch reads CDFCTQSKLRCNKNKPSCRRCTIQQQVC. The tract at residues 49-103 is disordered; the sequence is RRTGRPPKHPRRADDSQETSGQHGHQDPMTSAPADSCEQQSSHLDLEGDDTDFTL. Over residues 50 to 59 the composition is skewed to basic residues; it reads RTGRPPKHPR.

It localises to the nucleus. In terms of biological role, transcription factor that regulates the expression of the gene clusters that mediate the biosynthesis of the host-selective toxins (HSTs) AK-toxins responsible for Japanese pear black spot disease by the Japanese pear pathotype. AK-toxins are esters of 9,10-epoxy 8-hydroxy 9-methyldecatrienoic acid (EDA). On cellular level, AK-toxins affect plasma membrane of susceptible cells and cause a sudden increase in loss of K(+) after a few minutes of toxin treatment. In Alternaria alternata (Alternaria rot fungus), this protein is Transcription activator AKTR-2.